Here is a 261-residue protein sequence, read N- to C-terminus: Oxidoreductase ptaF (261 aa).

This sequence belongs to the avfA family.

It participates in secondary metabolite biosynthesis. Functionally, oxidoreductase; part of the gene cluster that mediates the biosynthesis of pestheic acid, a diphenyl ether which is a biosynthetic precursor of the unique chloropupukeananes. The biosynthesis initiates from condensation of acetate and malonate units catalyzed by the non-reducing PKS ptaA. As the ptaA protein is TE/CLC domain-deficient, hydrolysis and Claisen cyclization of the polyketide could be catalyzed by ptaB containing a beta-lactamase domain. The ptaB protein might hydrolyze the thioester bond between the ACP of ptaA and the intermediate to release atrochrysone carboxylic acid, which is spontaneously dehydrated to form endocrocin anthrone. Endocrocin anthrone is then converted to endocrocin, catalyzed by the anthrone oxygenase ptaC. Spontaneous decarboxylation of endocrocin occurs to generate emodin. An O-methyltransferase (ptaH or ptaI) could methylate emodin to form physcion. PtaJ could then catalyze the oxidative cleavage of physcion, and rotation of the intermediate could then afford desmethylisosulochrin. PtaF, a putative NADH-dependent oxidoreductase, might also participate in the oxidative cleavage step. Desmethylisosulochrin is then transformed by another O-methyltransferase (ptaH or ptaI) to form isosulochrin. Chlorination of isosulochrin by ptaM in the cyclohexadienone B ring then produces chloroisosulochrin. PtaE is responsible for the oxidative coupling reactions of both benzophenones isosulouchrin and chloroisosulochrin to RES-1214-1 and pestheic acid respectively, regardless of chlorination. The chain is Oxidoreductase ptaF from Pestalotiopsis fici (strain W106-1 / CGMCC3.15140).